The primary structure comprises 714 residues: Polyribonucleotide nucleotidyltransferase (714 aa).

2 residues coordinate Mg(2+): aspartate 489 and aspartate 495. The KH domain maps to proline 556–isoleucine 615. One can recognise an S1 motif domain in the interval glycine 625 to lysine 693. The interval serine 691–aspartate 714 is disordered. Positions proline 700–aspartate 714 are enriched in basic and acidic residues.

The protein belongs to the polyribonucleotide nucleotidyltransferase family. It depends on Mg(2+) as a cofactor.

It is found in the cytoplasm. The catalysed reaction is RNA(n+1) + phosphate = RNA(n) + a ribonucleoside 5'-diphosphate. In terms of biological role, involved in mRNA degradation. Catalyzes the phosphorolysis of single-stranded polyribonucleotides processively in the 3'- to 5'-direction. The protein is Polyribonucleotide nucleotidyltransferase of Streptococcus equi subsp. equi (strain 4047).